The primary structure comprises 135 residues: S-protein homolog 7 (135 aa).

A signal peptide spans 1-20; the sequence is MNNLFVLVIIIVLSAGSNNG.

It belongs to the plant self-incompatibility (S1) protein family.

It is found in the secreted. This is S-protein homolog 7 from Arabidopsis thaliana (Mouse-ear cress).